The primary structure comprises 327 residues: GMP reductase (327 aa).

Cys-176 acts as the Thioimidate intermediate in catalysis. Ile-205–Val-228 is an NADP(+) binding site.

This sequence belongs to the IMPDH/GMPR family. GuaC type 2 subfamily.

The enzyme catalyses IMP + NH4(+) + NADP(+) = GMP + NADPH + 2 H(+). Its function is as follows. Catalyzes the irreversible NADPH-dependent deamination of GMP to IMP. It functions in the conversion of nucleobase, nucleoside and nucleotide derivatives of G to A nucleotides, and in maintaining the intracellular balance of A and G nucleotides. This Streptococcus agalactiae serotype III (strain NEM316) protein is GMP reductase.